Reading from the N-terminus, the 180-residue chain is Cell division protein SepF (180 aa).

A disordered region spans residues 1-66; sequence MAFSFKSFFG…NRNGFAYDNG (66 aa). A compositionally biased stretch (acidic residues) spans 12–23; sequence ADDEEEEYEDSG. A compositionally biased stretch (low complexity) spans 24–57; that stretch reads YEQQPNQGQQQPVNSQQQNTSNQSYSGYNNQNQN.

Belongs to the SepF family. Homodimer. Interacts with FtsZ.

The protein resides in the cytoplasm. Its function is as follows. Cell division protein that is part of the divisome complex and is recruited early to the Z-ring. Probably stimulates Z-ring formation, perhaps through the cross-linking of FtsZ protofilaments. Its function overlaps with FtsA. This chain is Cell division protein SepF, found in Oenococcus oeni (strain ATCC BAA-331 / PSU-1).